A 111-amino-acid chain; its full sequence is V-type proton ATPase subunit G 2 (111 aa).

Belongs to the V-ATPase G subunit family. As to quaternary structure, V-ATPase is a heteromultimeric enzyme composed of a peripheral catalytic V1 complex (components A to H) attached to an integral membrane V0 proton pore complex (components: a, c, c', c'' and d).

Its function is as follows. Catalytic subunit of the peripheral V1 complex of vacuolar ATPase (V-ATPase). V-ATPase is responsible for acidifying a variety of intracellular compartments in eukaryotic cells. This chain is V-type proton ATPase subunit G 2 (VATG2), found in Nicotiana tabacum (Common tobacco).